We begin with the raw amino-acid sequence, 372 residues long: Cytochrome b (372 aa).

The next 4 membrane-spanning stretches (helical) occupy residues Phe25–Ile45, Trp69–Ile90, Trp105–Leu125, and Phe170–Ile190. The heme b site is built by His75 and His89. Heme b-binding residues include His174 and His188. A ubiquinone is bound at residue His193. Transmembrane regions (helical) follow at residues Tyr218–Ser238, Leu280–His300, Leu312–Ser332, and Phe339–Pro358.

It belongs to the cytochrome b family. In terms of assembly, the cytochrome bc1 complex contains 3 respiratory subunits (MT-CYB, CYC1 and UQCRFS1), 2 core proteins (UQCRC1 and UQCRC2) and probably 6 low-molecular weight proteins. Requires heme b as cofactor.

Its subcellular location is the mitochondrion inner membrane. Functionally, component of the ubiquinol-cytochrome c reductase complex (complex III or cytochrome b-c1 complex) that is part of the mitochondrial respiratory chain. The b-c1 complex mediates electron transfer from ubiquinol to cytochrome c. Contributes to the generation of a proton gradient across the mitochondrial membrane that is then used for ATP synthesis. The chain is Cytochrome b (MT-CYB) from Naja multifasciata (Burrowing cobra).